The primary structure comprises 321 residues: Citrate synthase (321 aa).

Active-site residues include His-248 and Asp-306.

Belongs to the citrate synthase family.

It catalyses the reaction oxaloacetate + acetyl-CoA + H2O = citrate + CoA + H(+). Its pathway is carbohydrate metabolism; tricarboxylic acid cycle; isocitrate from oxaloacetate: step 1/2. The chain is Citrate synthase (gltA) from Bartonella bacilliformis.